The sequence spans 216 residues: 3-keto-L-gulonate-6-phosphate decarboxylase UlaD (216 aa).

Asp11 provides a ligand contact to substrate. Positions 33 and 62 each coordinate Mg(2+). Arg192 is a substrate binding site.

The protein belongs to the HPS/KGPDC family. KGPDC subfamily. Homodimer. Mg(2+) is required as a cofactor.

It catalyses the reaction 3-dehydro-L-gulonate 6-phosphate + H(+) = L-xylulose 5-phosphate + CO2. Its pathway is cofactor degradation; L-ascorbate degradation; D-xylulose 5-phosphate from L-ascorbate: step 2/4. Its function is as follows. Catalyzes the decarboxylation of 3-keto-L-gulonate-6-P into L-xylulose-5-P. Is involved in the anaerobic L-ascorbate utilization. This is 3-keto-L-gulonate-6-phosphate decarboxylase UlaD from Escherichia coli O127:H6 (strain E2348/69 / EPEC).